Consider the following 336-residue polypeptide: Dihydroorotate dehydrogenase (quinone) (336 aa).

Residues 62–66 and Thr86 contribute to the FMN site; that span reads AGLDK. Residue Lys66 participates in substrate binding. 111–115 lines the substrate pocket; it reads NRMGF. 2 residues coordinate FMN: Asn139 and Asn172. Residue Asn172 coordinates substrate. Ser175 (nucleophile) is an active-site residue. Asn177 contacts substrate. FMN is bound by residues Lys217 and Thr245. 246–247 contributes to the substrate binding site; it reads NT. FMN contacts are provided by residues Gly268, Gly297, and 318-319; that span reads YS.

The protein belongs to the dihydroorotate dehydrogenase family. Type 2 subfamily. As to quaternary structure, monomer. The cofactor is FMN.

Its subcellular location is the cell membrane. The catalysed reaction is (S)-dihydroorotate + a quinone = orotate + a quinol. The protein operates within pyrimidine metabolism; UMP biosynthesis via de novo pathway; orotate from (S)-dihydroorotate (quinone route): step 1/1. Catalyzes the conversion of dihydroorotate to orotate with quinone as electron acceptor. In Enterobacter sp. (strain 638), this protein is Dihydroorotate dehydrogenase (quinone).